Reading from the N-terminus, the 297-residue chain is Cytosolic Fe-S cluster assembly factor CFD1 (297 aa).

15-22 (GKGGVGKS) provides a ligand contact to ATP. Residues cysteine 216 and cysteine 219 each contribute to the [4Fe-4S] cluster site.

This sequence belongs to the Mrp/NBP35 ATP-binding proteins family. NUBP2/CFD1 subfamily. Heterotetramer of 2 NBP35 and 2 CFD1 chains. [4Fe-4S] cluster serves as cofactor.

It is found in the cytoplasm. Functionally, component of the cytosolic iron-sulfur (Fe/S) protein assembly (CIA) machinery. Required for maturation of extramitochondrial Fe-S proteins. The NBP35-CFD1 heterotetramer forms a Fe-S scaffold complex, mediating the de novo assembly of an Fe-S cluster and its transfer to target apoproteins. The protein is Cytosolic Fe-S cluster assembly factor CFD1 of Phaeosphaeria nodorum (strain SN15 / ATCC MYA-4574 / FGSC 10173) (Glume blotch fungus).